We begin with the raw amino-acid sequence, 1440 residues long: Glucose transporter type 1 (1440 aa).

A signal peptide spans 1 to 23 (MAFLCAPGLTFFLTYSIFSAVLG). The Cytoplasmic segment spans residues 24–67 (MLQFGYNTGVINAPEKNIENFMKDVYKDRYGEDISEEFIQQLYS). The chain crosses the membrane as a helical span at residues 68 to 88 (VAVSIFAIGGMLGGFSGGWMA). Residues 89–95 (NRFGRKG) are Extracellular-facing. Residues 96-116 (GLLLNNVLGIAGACLMGFTKV) form a helical membrane-spanning segment. Residues 117-127 (SHSYEMLFLGR) are Cytoplasmic-facing. A helical membrane pass occupies residues 128-148 (FIIGVNCGLNTSLVPMYISEI). Topologically, residues 149–162 (APLNLRGGLGTVNQ) are extracellular. Position 162 (Gln-162) interacts with D-glucose. The helical transmembrane segment at 163–183 (LAVTVGLLLSQVLGIEQILGT) threads the bilayer. The Cytoplasmic portion of the chain corresponds to 184–186 (NEG). The chain crosses the membrane as a helical span at residues 187–207 (WPILLGLAICPAILQLILLPV). At 208–272 (CPESPRYLLI…LICSPTLRPP (65 aa)) the chain is on the extracellular side. The chain crosses the membrane as a helical span at residues 273 to 293 (LIIGIVMQLSQQFSGINAVFY). D-glucose is bound by residues 283-284 (QQ) and Asn-289. At 294–310 (YSTSLFMSSGLTEESAK) the chain is on the cytoplasmic side. The chain crosses the membrane as a helical span at residues 311 to 331 (FATIGIGAIMVVMTLVSIPLM). At 332-339 (DRTGRRTL) the chain is on the extracellular side. A helical transmembrane segment spans residues 340–360 (HLYGLGGMFIFSIFITISFLI). Topologically, residues 361-372 (KEMIDWMSYLSV) are cytoplasmic. The helical transmembrane segment at 373–393 (VATLGFVVFFAVGPGSIPWMI) threads the bilayer. Residue Trp-391 coordinates D-glucose. The Extracellular segment spans residues 394–405 (TAELFSQGPRPS). Residues 406 to 426 (AMAIAVLVNWMANFVVGIGFP) form a helical membrane-spanning segment. Over 427 to 429 (SMK) the chain is Cytoplasmic. The chain crosses the membrane as a helical span at residues 430-450 (TALENYTFLPFSVFLAIFWIF). Topologically, residues 451 to 534 (TYKKVPETKN…GPYPLSDSTN (84 aa)) are extracellular. Asn-460 and Asn-480 each carry an N-linked (GlcNAc...) asparagine glycan. The helical transmembrane segment at 535 to 555 (LLGPGSSSYGPGGVLGLAGSG) threads the bilayer. The Cytoplasmic portion of the chain corresponds to 556–1440 (SGLGGQCYTN…RKYTDFLRKK (885 aa)). Disordered regions lie at residues 628–708 (ERFL…SRYA), 725–808 (QANP…HSVM), 966–987 (APEG…SELP), 1000–1083 (FLAD…GSYH), 1304–1330 (LEGA…PLTH), and 1380–1401 (ANSP…GHHV). Polar residues predominate over residues 669–678 (PPDSASVRST). Positions 686 to 704 (QPQQVHHQQQQVHHQQQHQ) are enriched in low complexity. Residues 730–739 (QAPPQQPAPP) are compositionally biased toward pro residues. A compositionally biased stretch (basic residues) spans 754–789 (CQQRKHSHSPHHSRHTSPHSHHHHSHHSRHSRRSRR). Positions 1313 to 1330 (STTSEHSSSLPSPQPLTH) are enriched in low complexity.

The protein belongs to the major facilitator superfamily. Sugar transporter (TC 2.A.1.1) family. Glucose transporter subfamily.

It is found in the membrane. Its function is as follows. Facilitative glucose transporter. This Drosophila melanogaster (Fruit fly) protein is Glucose transporter type 1 (Glut1).